The following is a 469-amino-acid chain: Ufm1-specific protease 2 (469 aa).

Residue Met1 is modified to N-acetylmethionine. Residues Cys302, Asp426, and His428 contribute to the active site.

It belongs to the peptidase C78 family.

It localises to the endoplasmic reticulum. The protein resides in the cytoplasm. The protein localises to the nucleus. Its function is as follows. Thiol-dependent isopeptidase that specifically cleaves UFM1, a ubiquitin-like modifier protein, from conjugated proteins, such as CD274/PD-L1, CYB5R3, DDRGK1, MRE11, RPL26/uL24, TRIP4 and RPL26/uL24. While it is also able to mediate the processing of UFM1 precursors, a prerequisite for conjugation reactions, UFSP2 mainly acts as a protein deUFMylase that mediates deconjugation of UFM1 from target proteins. Mediates deUFMylation of RPL26/uL24, a critical step to release the UFM1 ribosome E3 ligase (UREL) complex during the recycling of 60S ribosome subunits from the endoplasmic reticulum. Catalyzes deUFMylation of TRIP4, regulating intracellular nuclear receptors transactivation and thereby regulate cell proliferation and differentiation. This is Ufm1-specific protease 2 from Pongo abelii (Sumatran orangutan).